Here is a 141-residue protein sequence, read N- to C-terminus: uncharacterized protein (141 aa).

It localises to the mitochondrion. This is an uncharacterized protein from Arabidopsis thaliana (Mouse-ear cress).